The chain runs to 296 residues: 4-diphosphocytidyl-2-C-methyl-D-erythritol kinase (296 aa).

Residue Lys18 is part of the active site. Residue 103–113 (PHGAGLGGGSS) coordinates ATP. Asp146 is a catalytic residue.

This sequence belongs to the GHMP kinase family. IspE subfamily.

It catalyses the reaction 4-CDP-2-C-methyl-D-erythritol + ATP = 4-CDP-2-C-methyl-D-erythritol 2-phosphate + ADP + H(+). It participates in isoprenoid biosynthesis; isopentenyl diphosphate biosynthesis via DXP pathway; isopentenyl diphosphate from 1-deoxy-D-xylulose 5-phosphate: step 3/6. In terms of biological role, catalyzes the phosphorylation of the position 2 hydroxy group of 4-diphosphocytidyl-2C-methyl-D-erythritol. The protein is 4-diphosphocytidyl-2-C-methyl-D-erythritol kinase of Solidesulfovibrio magneticus (strain ATCC 700980 / DSM 13731 / RS-1) (Desulfovibrio magneticus).